Here is a 210-residue protein sequence, read N- to C-terminus: Molybdenum cofactor guanylyltransferase (210 aa).

GTP-binding positions include 9–11 (LAG), lysine 21, aspartate 66, and aspartate 95. Aspartate 95 is a Mg(2+) binding site.

The protein belongs to the MobA family. Monomer. It depends on Mg(2+) as a cofactor.

Its subcellular location is the cytoplasm. It catalyses the reaction Mo-molybdopterin + GTP + H(+) = Mo-molybdopterin guanine dinucleotide + diphosphate. Its function is as follows. Transfers a GMP moiety from GTP to Mo-molybdopterin (Mo-MPT) cofactor (Moco or molybdenum cofactor) to form Mo-molybdopterin guanine dinucleotide (Mo-MGD) cofactor. The sequence is that of Molybdenum cofactor guanylyltransferase from Syntrophotalea carbinolica (strain DSM 2380 / NBRC 103641 / GraBd1) (Pelobacter carbinolicus).